Here is a 257-residue protein sequence, read N- to C-terminus: MLRLLTRSQAFRAVTLCQRPIISSRCIPIRNFQISPILAKKNKAKGGNKNKSEVQEIEEDNTDNQVPEIDFDDATNKFKGVIERFSKQANEAKLGKTSPNIFDKLIVETANGEVGFTSVAQTTVKGRNFMITVFDPSNVKSIINAVLGSDLNMNPQIDPSNKQTLKVPLPPLTTESKKENAKQLKLVYERFKNGSGRANGSLATIRGDVKNKFQKQHKKKKLSDAEEKVFKDFEKLHKQYTDKLTEVFKSAEQAILK.

It belongs to the RRF family.

The protein resides in the mitochondrion. Functionally, necessary for protein synthesis in mitochondria. Functions as a ribosome recycling factor in mitochondria. The protein is Ribosome-recycling factor, mitochondrial (RRF1) of Debaryomyces hansenii (strain ATCC 36239 / CBS 767 / BCRC 21394 / JCM 1990 / NBRC 0083 / IGC 2968) (Yeast).